A 1216-amino-acid polypeptide reads, in one-letter code: Regulator of telomere elongation helicase 1 (1216 aa).

In terms of domain architecture, Helicase ATP-binding spans 7–295 (KGVTVDFPFQ…TKVAQQAELH (289 aa)). 42-49 (SPTGTGKT) lines the ATP pocket. Cys-144, Cys-162, Cys-171, and Cys-206 together coordinate [4Fe-4S] cluster. Residues 150-166 (KKQESNHMQVHLCRRKV) carry the Nuclear localization signal motif. Residues 249 to 252 (DEAH) carry the DEAH box motif. The short motif at 874 to 880 (QRGRRRK) is the Nuclear localization signal element. 2 disordered regions span residues 978–1018 (GCSS…ATRQ) and 1140–1172 (GPGTQAPGPQEGGPAMPSDPVCEAPSPGPRKTQ). The short motif at 1172-1179 (QSKISSFL) is the PIP-box element.

This sequence belongs to the helicase family. RAD3/XPD subfamily. Interacts with TERF1. Interacts (via PIP-box) with PCNA; the interaction is direct and essential for suppressing telomere fragility. Interacts with MMS19; the interaction mediates the association of RTEL1 with the cytosolic iron-sulfur protein assembly (CIA) complex. Highly expressed in adult testis, liver and ovary.

It localises to the nucleus. The enzyme catalyses ATP + H2O = ADP + phosphate + H(+). Its function is as follows. A probable ATP-dependent DNA helicase implicated in telomere-length regulation, DNA repair and the maintenance of genomic stability. Acts as an anti-recombinase to counteract toxic recombination and limit crossover during meiosis. Regulates meiotic recombination and crossover homeostasis by physically dissociating strand invasion events and thereby promotes noncrossover repair by meiotic synthesis dependent strand annealing (SDSA) as well as disassembly of D loop recombination intermediates. Also disassembles T loops and prevents telomere fragility by counteracting telomeric G4-DNA structures, which together ensure the dynamics and stability of the telomere. This chain is Regulator of telomere elongation helicase 1, found in Bos taurus (Bovine).